The following is a 399-amino-acid chain: Guanine nucleotide-binding protein negative regulator 1 (399 aa).

WD repeat units lie at residues 44-83 (KPLN…LSKK), 105-145 (YSYS…NKAS), 150-194 (DHQE…VMTT), 207-247 (SLKG…PCQL), 252-292 (ERGN…DMVY), and 296-337 (GHRG…EETH).

As to quaternary structure, interacts with gpa1.

It is found in the cytoplasm. Functionally, negatively regulates the pheromone-response pathway. Acts as a structural mimic of the G protein beta subunit thereby interacting with gpa1 which then inhibits gpa1 signaling. This Schizosaccharomyces pombe (strain 972 / ATCC 24843) (Fission yeast) protein is Guanine nucleotide-binding protein negative regulator 1 (gnr1).